We begin with the raw amino-acid sequence, 185 residues long: Ribosome-recycling factor (185 aa).

This sequence belongs to the RRF family.

Its subcellular location is the cytoplasm. Functionally, responsible for the release of ribosomes from messenger RNA at the termination of protein biosynthesis. May increase the efficiency of translation by recycling ribosomes from one round of translation to another. The polypeptide is Ribosome-recycling factor (Pseudomonas entomophila (strain L48)).